We begin with the raw amino-acid sequence, 592 residues long: Potassium-transporting ATPase potassium-binding subunit (592 aa).

The next 10 helical transmembrane spans lie at 7 to 27 (ILLG…GTYI), 60 to 80 (LKYA…VYAL), 132 to 152 (ALAV…IALI), 175 to 195 (LHVL…QGVI), 279 to 299 (LSNF…CFTF), 310 to 330 (WAVL…AMHF), 409 to 429 (GLYG…LMIG), 449 to 469 (IAIL…VMLA), 513 to 533 (VMLG…VLAI), and 556 to 576 (LFVT…YVPA).

Belongs to the KdpA family. As to quaternary structure, the system is composed of three essential subunits: KdpA, KdpB and KdpC.

Its subcellular location is the cell inner membrane. Functionally, part of the high-affinity ATP-driven potassium transport (or Kdp) system, which catalyzes the hydrolysis of ATP coupled with the electrogenic transport of potassium into the cytoplasm. This subunit binds the periplasmic potassium ions and delivers the ions to the membrane domain of KdpB through an intramembrane tunnel. The chain is Potassium-transporting ATPase potassium-binding subunit from Dechloromonas aromatica (strain RCB).